A 156-amino-acid chain; its full sequence is Transcriptional repressor NrdR (156 aa).

Residues 3 to 34 fold into a zinc finger; that stretch reads CPFCGSMDTRVLDSRPTLDGAAIRRRRECISC. The 91-residue stretch at 49–139 folds into the ATP-cone domain; sequence VLVIKKDGRR…VYRDFREVDQ (91 aa).

Belongs to the NrdR family. Zn(2+) is required as a cofactor.

In terms of biological role, negatively regulates transcription of bacterial ribonucleotide reductase nrd genes and operons by binding to NrdR-boxes. The sequence is that of Transcriptional repressor NrdR from Thermotoga neapolitana (strain ATCC 49049 / DSM 4359 / NBRC 107923 / NS-E).